We begin with the raw amino-acid sequence, 968 residues long: Pumilio homolog 1 (968 aa).

Disordered regions lie at residues 1–25 (MIPE…DYEK) and 138–171 (NNVL…TGAS). Serine 194 bears the Phosphoserine mark. 3 disordered regions span residues 204 to 240 (GHGH…SQGI), 260 to 303 (GTPD…VTSG), and 360 to 382 (KSDQ…PHGS). 2 stretches are compositionally biased toward polar residues: residues 211–220 (QQPSRPASRN) and 227–238 (DSNNNLSPSASQ). Threonine 261 is modified (phosphothreonine). Residues 291 to 303 (TSNQSPFNGVTSG) show a composition bias toward polar residues. Residues 610–950 (FGSSMLEEFK…HVVARIEKLV (341 aa)) form the PUM-HD domain. 8 Pumilio repeats span residues 630–665 (EIAG…MVYE), 666–701 (EIMP…ELAE), 702–737 (KLFD…KMVK), 738–773 (ELDG…FIIS), 774–810 (TFFG…KVME), 811–846 (EILS…VIIK), 847–882 (ELAG…LLVN), and 883–924 (EMLG…LILT).

The protein resides in the cytoplasm. Functionally, sequence-specific RNA-binding protein that regulates translation and mRNA stability by binding the 3'-UTR of target mRNAs. Binds the APUM-binding elements (APBEs) in the 3'-UTR mRNA sequence of CLV1, PNH, WUS and FAS2. The sequence is that of Pumilio homolog 1 (APUM1) from Arabidopsis thaliana (Mouse-ear cress).